Consider the following 234-residue polypeptide: Proteasome subunit alpha type-2 (234 aa).

It belongs to the peptidase T1A family. In terms of assembly, the 26S proteasome consists of a 20S proteasome core and two 19S regulatory subunits. The 20S proteasome core is composed of 28 subunits that are arranged in four stacked rings, resulting in a barrel-shaped structure. The two end rings are each formed by seven alpha subunits, and the two central rings are each formed by seven beta subunits. The catalytic chamber with the active sites is on the inside of the barrel. Interacts with Rpn6.

The protein resides in the cytoplasm. It localises to the nucleus. In terms of biological role, the proteasome is a multicatalytic proteinase complex which is characterized by its ability to cleave peptides with Arg, Phe, Tyr, Leu, and Glu adjacent to the leaving group at neutral or slightly basic pH. The proteasome has an ATP-dependent proteolytic activity. The sequence is that of Proteasome subunit alpha type-2 (Prosalpha2) from Drosophila melanogaster (Fruit fly).